Consider the following 202-residue polypeptide: Small ribosomal subunit protein uS4 (202 aa).

The segment at 15–42 (LGDLPGLTRKAAKRSYPPGQHGQARRKR) is disordered. In terms of domain architecture, S4 RNA-binding spans 90–152 (NRLDNVCFRL…KCSKQLAEGN (63 aa)).

This sequence belongs to the universal ribosomal protein uS4 family. Part of the 30S ribosomal subunit. Contacts protein S5. The interaction surface between S4 and S5 is involved in control of translational fidelity.

Functionally, one of the primary rRNA binding proteins, it binds directly to 16S rRNA where it nucleates assembly of the body of the 30S subunit. With S5 and S12 plays an important role in translational accuracy. The sequence is that of Small ribosomal subunit protein uS4 from Parasynechococcus marenigrum (strain WH8102).